A 151-amino-acid chain; its full sequence is Large ribosomal subunit protein uL16 (151 aa).

Belongs to the universal ribosomal protein uL16 family. In terms of assembly, part of the 50S ribosomal subunit.

In terms of biological role, binds 23S rRNA and is also seen to make contacts with the A and possibly P site tRNAs. This Chloroflexus aurantiacus (strain ATCC 29364 / DSM 637 / Y-400-fl) protein is Large ribosomal subunit protein uL16.